A 348-amino-acid polypeptide reads, in one-letter code: MAFFIASSPHAHNRRSTPDLMKWVAICALPGLLAQTYFFGWGTLIQLVFAIALAVTFEAAVMLLRKRPPVMALRDYSAVVTAWLLSVAIPPHSPWWILVIGMFFAIVIAKHLYGGLGQNPFNPAMVAYVVLLISFPVQMTSWNAPASLTAEATSFVDSFLMIFTGFNNEGLSLQQARLGIDGTTMATPLDAFKTALTAGNTASEALSQPQFSWLAGVGWEWVNLAYLIGGLVLIKQRVIQWHIPVAFLGSLTLFSLMFLMFTPGETASPTIHLLSGATMLGAFFIATDPVSASTTVKGRLVFGALIGGLVFIIRSWGGFPDGVAFAVLLANMCVPLIDYYTKPRTYGH.

The next 3 helical transmembrane spans lie at 20-39, 72-91, and 120-140; these read LMKW…TYFF, ALRD…AIPP, and PFNP…VQMT. Thr-187 is modified (FMN phosphoryl threonine). 5 helical membrane passes run 214 to 234, 241 to 261, 266 to 286, 300 to 320, and 321 to 341; these read LAGV…LVLI, WHIP…FLMF, TASP…FFIA, LVFG…GGFP, and DGVA…DYYT.

This sequence belongs to the NqrB/RnfD family. In terms of assembly, the complex is composed of six subunits: RnfA, RnfB, RnfC, RnfD, RnfE and RnfG. It depends on FMN as a cofactor.

Its subcellular location is the cell inner membrane. Part of a membrane-bound complex that couples electron transfer with translocation of ions across the membrane. The polypeptide is Ion-translocating oxidoreductase complex subunit D (Vibrio atlanticus (strain LGP32) (Vibrio splendidus (strain Mel32))).